The sequence spans 502 residues: L-aspartate oxidase (502 aa).

FAD is bound by residues 12–15, lysine 34, 41–48, and aspartate 207; these read NGLA and ASRHAQGG. The active-site Proton donor/acceptor is arginine 276. FAD-binding positions include glutamate 362 and 378 to 379; that span reads SL.

The protein belongs to the FAD-dependent oxidoreductase 2 family. NadB subfamily. FAD is required as a cofactor.

It is found in the cytoplasm. The enzyme catalyses L-aspartate + O2 = iminosuccinate + H2O2. The protein operates within cofactor biosynthesis; NAD(+) biosynthesis; iminoaspartate from L-aspartate (oxidase route): step 1/1. In terms of biological role, catalyzes the oxidation of L-aspartate to iminoaspartate, the first step in the de novo biosynthesis of NAD(+). The sequence is that of L-aspartate oxidase (nadB) from Neisseria meningitidis serogroup B (strain ATCC BAA-335 / MC58).